The chain runs to 121 residues: Small ribosomal subunit protein uS13 (121 aa).

The segment at R92 to K121 is disordered.

The protein belongs to the universal ribosomal protein uS13 family. Part of the 30S ribosomal subunit. Forms a loose heterodimer with protein S19. Forms two bridges to the 50S subunit in the 70S ribosome.

In terms of biological role, located at the top of the head of the 30S subunit, it contacts several helices of the 16S rRNA. In the 70S ribosome it contacts the 23S rRNA (bridge B1a) and protein L5 of the 50S subunit (bridge B1b), connecting the 2 subunits; these bridges are implicated in subunit movement. Contacts the tRNAs in the A and P-sites. This Polynucleobacter asymbioticus (strain DSM 18221 / CIP 109841 / QLW-P1DMWA-1) (Polynucleobacter necessarius subsp. asymbioticus) protein is Small ribosomal subunit protein uS13.